The sequence spans 179 residues: Endoribonuclease YbeY (179 aa).

Residues His-148, His-152, and His-158 each contribute to the Zn(2+) site.

It belongs to the endoribonuclease YbeY family. It depends on Zn(2+) as a cofactor.

The protein resides in the cytoplasm. Functionally, single strand-specific metallo-endoribonuclease involved in late-stage 70S ribosome quality control and in maturation of the 3' terminus of the 16S rRNA. This chain is Endoribonuclease YbeY, found in Prochlorococcus marinus (strain MIT 9215).